An 877-amino-acid chain; its full sequence is Envelope glycoprotein gp160 (877 aa).

Residues 1-19 form the signal peptide; that stretch reads MKLTLLIGILLIGIGVVLN. Residues 20–707 lie on the Extracellular side of the membrane; it reads TRQQWVTVFY…SWFDFSKWLN (688 aa). Residues Asn-36, Asn-69, Asn-118, Asn-135, Asn-148, Asn-158, Asn-173, Asn-204, Asn-216, Asn-258, Asn-261, Asn-272, Asn-282, Asn-288, Asn-300, Asn-312, Asn-322, Asn-379, Asn-420, Asn-431, Asn-495, and Asn-498 are each glycosylated (N-linked (GlcNAc...) asparagine; by host). 5 disulfides stabilise this stretch: Cys-102/Cys-224, Cys-109/Cys-215, Cys-114/Cys-174, Cys-237/Cys-267, and Cys-247/Cys-259. Residues 114–173 form a V1 region; it reads CVELNSSEPTTTPKSTTASTTNITASTTTLPCVQNKTSTVLESCNETIIEKELNEEPASN. Positions 174-215 are V2; it reads CTFAMAGYVRDQKKKYSVVWNDAEIMCKKGNNSNRECYMIHC. Residues 317–349 are V3; the sequence is CKRPGNKTVLPVTIMAGLVFHSQRYNTRLRQAW. Cys-317 and Cys-350 are joined by a disulfide. Cystine bridges form between Cys-402–Cys-478 and Cys-409–Cys-451. The tract at residues 409 to 451 is V4; the sequence is CKMDWFLNYLNNRTVDPDHNPCNGTKGKGKAPGPCAQRTYVAC. A V5 region spans residues 494–501; that stretch reads KNRTNVTL. A fusion peptide region spans residues 544–564; sequence VPFVLGFLGFLGAAGTAMGAA. Residues 607–623 form an immunosuppression region; that stretch reads LNARVTALEKYLEDQAR. N-linked (GlcNAc...) asparagine; by host glycosylation is found at Asn-652 and Asn-668. Residues 668–692 adopt a coiled-coil conformation; that stretch reads NITTQLEEARAQEEKNLDAYQKLSS. The interval 689 to 710 is MPER; binding to GalCer; sequence KLSSWSDFWSWFDFSKWLNILK. The helical transmembrane segment at 708 to 728 threads the bilayer; sequence ILKIGFLDVLGIIGLRLLYTV. Topologically, residues 729-877 are cytoplasmic; it reads YSCIARVRQG…VRQGLEGILN (149 aa). Residues 739–742 carry the YXXL motif; contains endocytosis signal motif; it reads YSPL. A disordered region spans residues 751-779; sequence WKGQPDNAEGPGEGGDKRKNSSEPWQKES.

In terms of assembly, the mature envelope protein (Env) consists of a homotrimer of non-covalently associated gp120-gp41 heterodimers. The resulting complex protrudes from the virus surface as a spike. Interacts with host CD4 and CCR5. Gp120 also interacts with the C-type lectins CD209/DC-SIGN and CLEC4M/DC-SIGNR (collectively referred to as DC-SIGN(R)). As to quaternary structure, the mature envelope protein (Env) consists of a homotrimer of non-covalently associated gp120-gp41 heterodimers. The resulting complex protrudes from the virus surface as a spike. Post-translationally, specific enzymatic cleavages in vivo yield mature proteins. Envelope glycoproteins are synthesized as an inactive precursor that is heavily N-glycosylated and processed likely by host cell furin in the Golgi to yield the mature SU and TM proteins. The cleavage site between SU and TM requires the minimal sequence [KR]-X-[KR]-R.

It localises to the virion membrane. The protein localises to the host cell membrane. The protein resides in the host endosome membrane. Functionally, the surface protein gp120 (SU) attaches the virus to the host lymphoid cell by binding to the primary receptor CD4. This interaction induces a structural rearrangement creating a high affinity binding site for a chemokine coreceptor like CCR5. This peculiar 2 stage receptor-interaction strategy allows gp120 to maintain the highly conserved coreceptor-binding site in a cryptic conformation, protected from neutralizing antibodies. These changes are transmitted to the transmembrane protein gp41 and are thought to activate its fusogenic potential by unmasking its fusion peptide. Surface protein gp120 (SU) may target the virus to gut-associated lymphoid tissue (GALT) by binding host ITGA4/ITGB7 (alpha-4/beta-7 integrins), a complex that mediates T-cell migration to the GALT. Interaction between gp120 and ITGA4/ITGB7 would allow the virus to enter GALT early in the infection, infecting and killing most of GALT's resting CD4+ T-cells. This T-cell depletion is believed to be the major insult to the host immune system leading to AIDS. Its function is as follows. The surface protein gp120 is a ligand for CD209/DC-SIGN and CLEC4M/DC-SIGNR, which are respectively found on dendritic cells (DCs), and on endothelial cells of liver sinusoids and lymph node sinuses. These interactions allow capture of viral particles at mucosal surfaces by these cells and subsequent transmission to permissive cells. DCs are professional antigen presenting cells, critical for host immunity by inducing specific immune responses against a broad variety of pathogens. They act as sentinels in various tissues where they take up antigen, process it, and present it to T-cells following migration to lymphoid organs. SIV subverts the migration properties of dendritic cells to gain access to CD4+ T-cells in lymph nodes. Virus transmission to permissive T-cells occurs either in trans (without DCs infection, through viral capture and transmission), or in cis (following DCs productive infection, through the usual CD4-gp120 interaction), thereby inducing a robust infection. In trans infection, bound virions remain infectious over days and it is proposed that they are not degraded, but protected in non-lysosomal acidic organelles within the DCs close to the cell membrane thus contributing to the viral infectious potential during DCs' migration from the periphery to the lymphoid tissues. On arrival at lymphoid tissues, intact virions recycle back to DCs' cell surface allowing virus transmission to CD4+ T-cells. Virion capture also seems to lead to MHC-II-restricted viral antigen presentation, and probably to the activation of SIV-specific CD4+ cells. In terms of biological role, the transmembrane protein gp41 (TM) acts as a class I viral fusion protein. Under the current model, the protein has at least 3 conformational states: pre-fusion native state, pre-hairpin intermediate state, and post-fusion hairpin state. During fusion of viral and target intracellular membranes, the coiled coil regions (heptad repeats) assume a trimer-of-hairpins structure, positioning the fusion peptide in close proximity to the C-terminal region of the ectodomain. The formation of this structure appears to drive apposition and subsequent fusion of viral and target cell membranes. Complete fusion occurs in host cell endosomes. The virus undergoes clathrin-dependent internalization long before endosomal fusion, thus minimizing the surface exposure of conserved viral epitopes during fusion and reducing the efficacy of inhibitors targeting these epitopes. Membranes fusion leads to delivery of the nucleocapsid into the cytoplasm. Functionally, the envelope glycoprotein gp160 precursor down-modulates cell surface CD4 antigen by interacting with it in the endoplasmic reticulum and blocking its transport to the cell surface. The gp120-gp41 heterodimer allows rapid transcytosis of the virus through CD4 negative cells such as simple epithelial monolayers of the intestinal, rectal and endocervical epithelial barriers. Both gp120 and gp41 specifically recognize glycosphingolipids galactosyl-ceramide (GalCer) or 3' sulfo-galactosyl-ceramide (GalS) present in the lipid rafts structures of epithelial cells. Binding to these alternative receptors allows the rapid transcytosis of the virus through the epithelial cells. This transcytotic vesicle-mediated transport of virions from the apical side to the basolateral side of the epithelial cells does not involve infection of the cells themselves. This Cercopithecidae (Old World monkeys) protein is Envelope glycoprotein gp160 (env).